Consider the following 1938-residue polypeptide: MSFKEAKPGERGKNPEDHGRKQAASWMNGMEAANQPSTSAEKKSHHWRSYKLIIDPALRKGQQKLYRYDGLSFSMPNSGAPPVDSVRDPRIGRIWTKTKELDLPVPKLKIDEFYVGPVPPKQVTFAKLNDNIRENFLGDMCKKYGEVEEVEILYNPKNKKHLGIAKVIFATVKGAKDAVKHLHNTSVMGNIIHAELDTKGETRMRFYELLVNGYYTPQTLPVGSDLDASPTVNETPQVVEPVKRTKETAVGASVTPNSSTPFSHDTAYSSSRQGTPNSYSQFTPQSQGTPHTPRLGTPFSQDSSYSSRQTTPAFHYGQDSSFKPRRHENKFTDAYNRRPGHHYVHSSGSYRGPENTFNVTRPQAETVQFPRTPPLSHSSGNNKSAFSPYQGSTVFPQTDDNQYPQTSRDMEYRRTGPPTSDSYSDGSLELKLVKEKPEEPPPPEPDSTTEQKASFAQTPERCATPGTPTLEAEMQHDSLDTRIAMLLKEQRTQLHLISSDQNSDSEIRMEGSPISSSSSQLSPIPPYSSSSHYQDVTPSSRPSSTGLEDISPTPLPDSDDDEPIPGTASLCQNSRSASPIDQINQPVRKMETLDNKELVVGDETPTSEKMDEGHPSSGEDMEISDDEVTPSPITSAECAITSSSVIPILPPGFPPLPPPPPPQSGFPMPPPLPPPPPPTHPSVTVPPPPLPAPPGVPPHHILHHPPPYHHFPVMQGEMMNVLGNHWGGMTMSFQMQTQMLSRMMQGQGSYPYHHFMGGSMQFGNQLPYRPFALSAHLSRGQPWPPLPKFDPSVPPPGYEPKKEDPHKATVDGVLQVIVKELKAIMKRDLNRKMVEVVAFRAFDEWWDKKERLAKQSLTPVKSGESKDEDKQKTKEHITSSLLESWNKGEGLGFEGIGLGIGLRGAIRLPSFKVKRKEPPDAALAGDQKRIRPSHSVDDEDEESERDRDISGTASDLSKKDADAVNIRRRPARPLDSEGEEEVESEGDDGETSDKEAFEKEDQDAGSVSALSSKKRLYGEKEDEEDETQSSGKEEDLVSEEEDITSVASSRAEMDSSDESDESSEYESSSDSDDEIEEEDDDDEEEELVFEDDQSEELDLGQEDYIETDREEDFFKEDVSECSSPVKAEADMELEDDDVQKLEQDVAHQTAQDTSHLRKKDLDVPLVESKEHKQDTFDKMERLSAVPMQQNVFKEHEKAPSPMNEEEEYIELRLEPVPLVPDNAPPAVQEPMIIRPLTPTGAFGESGPVLKLEEPKLQVNLAHFVAEDEDLYPRTPGRDTAAHSDTEVTFQPGLKVAPSSLPLLQSHNKEEECLLPPEKHTGHLKVTKTLSEEELPRTPGRDILVKSSHLGKSQSTETIPATPGSDAPLTGNSLTLTSPHIPGSPFSYLSQSPGIINSGIPRTPGRDFNFTPIFPESNSIFPSHPSGKKSSVDEPDEKSFKEPTSASLTMNSVPSPIPFASPPRGVPHMDIRLETDDLESSDTQAYLSDKLLSEESECEFTKGQLPSTDESAPSPPFPPTDKRKGPKKPLAAHEFEACVALSEGALGKQLFIGQPDSVSGIKDPAAVPLDFRNDGLSENTVHDPIIQKVPLKELENQWNEVLKEEEEDISKHKKSRNSRLNKLYDEFSTLPSPEYSPPRAMFKPRSEFEEMTILYDIWNGGIDDEDMKYMCITYDRLLQQDNGMDWLNDTLWVYHPPTSVYSPKKKKRDDGLREHVTGCARSEGYYKIDKKDKLKYLINNRSLADEPPIDTQGKSIPAQPQASTRAGSERRSEQRRLLSSFTGSCDSDLLKFNQLKFRKKKIRFCKSHIHDWGLFAMEPIVADEMVIEYVGQNIRQVIADMREKRYEDEGIGSSYMFRVDHDTIIDATKCGNFARFINHSCNPNCYAKVVTVESQKKIVIYSKQYINVNEEITYDYKFPIEDVKIPCLCGAENCRGTLN.

Basic and acidic residues predominate over residues 1 to 20; it reads MSFKEAKPGERGKNPEDHGR. Positions 1–44 are disordered; it reads MSFKEAKPGERGKNPEDHGRKQAASWMNGMEAANQPSTSAEKKS. Residues 111–199 form the RRM domain; the sequence is DEFYVGPVPP…NIIHAELDTK (89 aa). Disordered regions lie at residues 226–357, 369–484, 496–630, 652–688, 916–1125, 1147–1174, 1187–1206, 1327–1373, 1413–1468, 1496–1528, and 1744–1772; these read LDAS…ENTF, FPRT…TRIA, LISS…EVTP, GFPP…VPPP, KEPP…SSPV, HQTA…HKQD, MQQN…NEEE, KTLS…GNSL, FPES…VPHM, ECEF…PKKP, and DEPP…RRSE. Polar residues-rich tracts occupy residues 254-290, 298-312, 375-407, and 446-457; these read VTPN…QGTP, PFSQ…QTTP, LSHS…PQTS, and DSTTEQKASFAQ. The span at 512–531 shows a compositional bias: low complexity; the sequence is SPISSSSSQLSPIPPYSSSS. Polar residues-rich tracts occupy residues 532–546 and 569–585; these read HYQD…SSTG and SLCQ…QINQ. Residues 588 to 599 show a composition bias toward basic and acidic residues; the sequence is RKMETLDNKELV. The span at 619–628 shows a compositional bias: acidic residues; the sequence is EDMEISDDEV. Composition is skewed to acidic residues over residues 976–990 and 1054–1114; these read SEGE…DDGE and DSSD…EDFF. A compositionally biased stretch (basic and acidic residues) spans 1159–1174; it reads KDLDVPLVESKEHKQD. Positions 1329–1343 are enriched in basic and acidic residues; the sequence is LSEEELPRTPGRDIL. 2 stretches are compositionally biased toward polar residues: residues 1349-1358 and 1441-1453; these read LGKSQSTETI and EPTS…NSVP. Residues 1454–1464 are compositionally biased toward pro residues; that stretch reads SPIPFASPPRG. Over residues 1751-1765 the composition is skewed to polar residues; it reads QGKSIPAQPQASTRA. The RxxxRR motif motif lies at 1770 to 1775; it reads RSEQRR. The SET domain occupies 1799 to 1916; sequence KKIRFCKSHI…VNEEITYDYK (118 aa). Position 1915 (Tyr1915) interacts with S-adenosyl-L-methionine. Residues 1922-1938 form the Post-SET domain; sequence VKIPCLCGAENCRGTLN.

The protein belongs to the class V-like SAM-binding methyltransferase superfamily. As to quaternary structure, component of the SET1B/COMPASS complex.

It localises to the nucleus speckle. The protein localises to the chromosome. The catalysed reaction is L-lysyl(4)-[histone H3] + 3 S-adenosyl-L-methionine = N(6),N(6),N(6)-trimethyl-L-lysyl(4)-[histone H3] + 3 S-adenosyl-L-homocysteine + 3 H(+). Its function is as follows. Histone methyltransferase that specifically methylates 'Lys-4' of histone H3, when part of the SET1 histone methyltransferase (HMT) complex, but not if the neighboring 'Lys-9' residue is already methylated. H3 'Lys-4' methylation represents a specific tag for epigenetic transcriptional activation. This Xenopus laevis (African clawed frog) protein is Histone-lysine N-methyltransferase SETD1B (setd1b).